The following is a 71-amino-acid chain: Ribosome modulation factor (71 aa).

Belongs to the ribosome modulation factor family.

It is found in the cytoplasm. In terms of biological role, during stationary phase, converts 70S ribosomes to an inactive dimeric form (100S ribosomes). This is Ribosome modulation factor from Pseudomonas savastanoi pv. phaseolicola (strain 1448A / Race 6) (Pseudomonas syringae pv. phaseolicola (strain 1448A / Race 6)).